Reading from the N-terminus, the 157-residue chain is Probable succinate transporter subunit YjjB (157 aa).

4 helical membrane-spanning segments follow: residues 2–22, 55–75, 87–107, and 129–149; these read GIISFIFALAEDMLLAAIPAV, AGFNIEWATFLAALLVGSIGI, IFTVAAVIPMFPGISAYTAMI, and FLKASSIVGALSIGLSIPGLW.

It belongs to the ThrE exporter (TC 2.A.79) family. As to quaternary structure, the transporter is composed of YjjB and YjjP.

It localises to the cell inner membrane. Its function is as follows. Involved in succinate export with YjjP. Both proteins are required for export. This chain is Probable succinate transporter subunit YjjB, found in Klebsiella pneumoniae (strain 342).